The primary structure comprises 216 residues: Somatotropin (216 aa).

An N-terminal signal peptide occupies residues 1-26; that stretch reads MAAGPRTSALLAFALLCLPWTREVGA. Residue His45 coordinates Zn(2+). A disulfide bridge connects residues Cys78 and Cys189. Ser131 is subject to Phosphoserine. Glu198 provides a ligand contact to Zn(2+). Cys206 and Cys214 are disulfide-bonded.

The protein belongs to the somatotropin/prolactin family.

It is found in the secreted. Plays an important role in growth control. Its major role in stimulating body growth is to stimulate the liver and other tissues to secrete IGF1. It stimulates both the differentiation and proliferation of myoblasts. It also stimulates amino acid uptake and protein synthesis in muscle and other tissues. The chain is Somatotropin (GH1) from Sus scrofa (Pig).